Here is a 562-residue protein sequence, read N- to C-terminus: tRNA (guanine(37)-N(1))-methyltransferase (562 aa).

The N-terminal 41 residues, 1–41 (MLFRRFLNLTTKTPHLQTFRARHYFRNMSCPELIPPPTVRG), are a transit peptide targeting the mitochondrion. S-adenosyl-L-methionine-binding positions include His-243, 281-282 (DL), and Asn-340. Residues 523-534 (AHIVAKKPEKKP) show a composition bias toward basic and acidic residues. A disordered region spans residues 523 to 562 (AHIVAKKPEKKPLPAKPASKKNKNQANTKQVEAGLDKMQM).

This sequence belongs to the class I-like SAM-binding methyltransferase superfamily. TRM5/TYW2 family. In terms of assembly, monomer.

It localises to the mitochondrion matrix. It is found in the nucleus. The protein localises to the cytoplasm. The catalysed reaction is guanosine(37) in tRNA + S-adenosyl-L-methionine = N(1)-methylguanosine(37) in tRNA + S-adenosyl-L-homocysteine + H(+). In terms of biological role, specifically methylates the N1 position of guanosine-37 in various cytoplasmic and mitochondrial tRNAs. Methylation is not dependent on the nature of the nucleoside 5' of the target nucleoside. This is the first step in the biosynthesis of wybutosine (yW), a modified base adjacent to the anticodon of tRNAs and required for accurate decoding. The polypeptide is tRNA (guanine(37)-N(1))-methyltransferase (Aedes aegypti (Yellowfever mosquito)).